Reading from the N-terminus, the 1210-residue chain is Ice nucleation protein (1210 aa).

The octapeptide periodicity stretch occupies residues 165 to 1156 (AVYGSTLTGA…LSGGENSTLI (992 aa)).

It belongs to the bacterial ice nucleation protein family.

The protein resides in the cell outer membrane. In terms of biological role, ice nucleation proteins enable bacteria to nucleate crystallization in supercooled water. The chain is Ice nucleation protein (inaW) from Pseudomonas fluorescens.